The sequence spans 413 residues: Multifunctional CCA protein (413 aa).

Residues Gly-8 and Arg-11 each coordinate ATP. Residues Gly-8 and Arg-11 each contribute to the CTP site. Mg(2+)-binding residues include Asp-21 and Asp-23. The ATP site is built by Arg-91, Arg-137, and Arg-140. CTP-binding residues include Arg-91, Arg-137, and Arg-140. In terms of domain architecture, HD spans 228 to 329 (TGLHTLMTVT…VKLFDSIDAW (102 aa)).

It belongs to the tRNA nucleotidyltransferase/poly(A) polymerase family. Bacterial CCA-adding enzyme type 1 subfamily. In terms of assembly, monomer. Can also form homodimers and oligomers. Mg(2+) serves as cofactor. Ni(2+) is required as a cofactor.

It catalyses the reaction a tRNA precursor + 2 CTP + ATP = a tRNA with a 3' CCA end + 3 diphosphate. It carries out the reaction a tRNA with a 3' CCA end + 2 CTP + ATP = a tRNA with a 3' CCACCA end + 3 diphosphate. In terms of biological role, catalyzes the addition and repair of the essential 3'-terminal CCA sequence in tRNAs without using a nucleic acid template. Adds these three nucleotides in the order of C, C, and A to the tRNA nucleotide-73, using CTP and ATP as substrates and producing inorganic pyrophosphate. tRNA 3'-terminal CCA addition is required both for tRNA processing and repair. Also involved in tRNA surveillance by mediating tandem CCA addition to generate a CCACCA at the 3' terminus of unstable tRNAs. While stable tRNAs receive only 3'-terminal CCA, unstable tRNAs are marked with CCACCA and rapidly degraded. This chain is Multifunctional CCA protein, found in Klebsiella pneumoniae (strain 342).